Here is a 453-residue protein sequence, read N- to C-terminus: Allantoinase (453 aa).

Residues His59, His61, Lys146, His186, His242, and Asp315 each coordinate Zn(2+). Residue Lys146 is modified to N6-carboxylysine.

The protein belongs to the metallo-dependent hydrolases superfamily. Allantoinase family. In terms of assembly, homotetramer. It depends on Zn(2+) as a cofactor. Post-translationally, carboxylation allows a single lysine to coordinate two zinc ions.

It carries out the reaction (S)-allantoin + H2O = allantoate + H(+). It functions in the pathway nitrogen metabolism; (S)-allantoin degradation; allantoate from (S)-allantoin: step 1/1. Catalyzes the conversion of allantoin (5-ureidohydantoin) to allantoic acid by hydrolytic cleavage of the five-member hydantoin ring. In Escherichia coli O127:H6 (strain E2348/69 / EPEC), this protein is Allantoinase.